The following is a 110-amino-acid chain: UPF0251 protein PH0803 (110 aa).

This sequence belongs to the UPF0251 family.

The chain is UPF0251 protein PH0803 from Pyrococcus horikoshii (strain ATCC 700860 / DSM 12428 / JCM 9974 / NBRC 100139 / OT-3).